The sequence spans 171 residues: 3-hydroxydecanoyl-[acyl-carrier-protein] dehydratase (171 aa).

The active site involves His-70.

This sequence belongs to the thioester dehydratase family. FabA subfamily. As to quaternary structure, homodimer.

The protein resides in the cytoplasm. It catalyses the reaction a (3R)-hydroxyacyl-[ACP] = a (2E)-enoyl-[ACP] + H2O. It carries out the reaction (3R)-hydroxydecanoyl-[ACP] = (2E)-decenoyl-[ACP] + H2O. The catalysed reaction is (2E)-decenoyl-[ACP] = (3Z)-decenoyl-[ACP]. The protein operates within lipid metabolism; fatty acid biosynthesis. Its function is as follows. Necessary for the introduction of cis unsaturation into fatty acids. Catalyzes the dehydration of (3R)-3-hydroxydecanoyl-ACP to E-(2)-decenoyl-ACP and then its isomerization to Z-(3)-decenoyl-ACP. Can catalyze the dehydratase reaction for beta-hydroxyacyl-ACPs with saturated chain lengths up to 16:0, being most active on intermediate chain length. The polypeptide is 3-hydroxydecanoyl-[acyl-carrier-protein] dehydratase (Hydrogenovibrio crunogenus (strain DSM 25203 / XCL-2) (Thiomicrospira crunogena)).